A 471-amino-acid chain; its full sequence is 8-amino-7-oxononanoate synthase (471 aa).

Substrate is bound at residue Arg-40. Residue 131-132 participates in pyridoxal 5'-phosphate binding; that stretch reads GY. Position 156 (His-156) interacts with substrate. 3 residues coordinate pyridoxal 5'-phosphate: Ser-202, His-230, and Thr-258. Lys-261 bears the N6-(pyridoxal phosphate)lysine mark. Thr-377 is a substrate binding site. A disordered region spans residues 409-471; sequence SEGQTRREAE…LGAARRETAA (63 aa).

Belongs to the class-II pyridoxal-phosphate-dependent aminotransferase family. BioF subfamily. As to quaternary structure, homodimer. Pyridoxal 5'-phosphate is required as a cofactor.

It catalyses the reaction 6-carboxyhexanoyl-[ACP] + L-alanine + H(+) = (8S)-8-amino-7-oxononanoate + holo-[ACP] + CO2. It functions in the pathway cofactor biosynthesis; biotin biosynthesis. Its function is as follows. Catalyzes the decarboxylative condensation of pimeloyl-[acyl-carrier protein] and L-alanine to produce 8-amino-7-oxononanoate (AON), [acyl-carrier protein], and carbon dioxide. This is 8-amino-7-oxononanoate synthase from Burkholderia ambifaria (strain ATCC BAA-244 / DSM 16087 / CCUG 44356 / LMG 19182 / AMMD) (Burkholderia cepacia (strain AMMD)).